A 152-amino-acid chain; its full sequence is Deoxyuridine 5'-triphosphate nucleotidohydrolase (152 aa).

Residues 71–73 (RSG), asparagine 84, 88–90 (LID), and methionine 98 contribute to the substrate site.

The protein belongs to the dUTPase family. Mg(2+) is required as a cofactor.

It carries out the reaction dUTP + H2O = dUMP + diphosphate + H(+). It functions in the pathway pyrimidine metabolism; dUMP biosynthesis; dUMP from dCTP (dUTP route): step 2/2. This enzyme is involved in nucleotide metabolism: it produces dUMP, the immediate precursor of thymidine nucleotides and it decreases the intracellular concentration of dUTP so that uracil cannot be incorporated into DNA. The protein is Deoxyuridine 5'-triphosphate nucleotidohydrolase of Salmonella agona (strain SL483).